Consider the following 284-residue polypeptide: RNase adapter protein RapZ (284 aa).

8-15 is a binding site for ATP; it reads GRSGSGKS. 56 to 59 contacts GTP; sequence DVRN. The RNA-binding stretch occupies residues 266-284; sequence RSRGKNVQSRHRTLEKRKP.

This sequence belongs to the RapZ-like family. RapZ subfamily. Homotrimer.

Modulates the synthesis of GlmS, by affecting the processing and stability of the regulatory small RNA GlmZ. When glucosamine-6-phosphate (GlcN6P) concentrations are high in the cell, RapZ binds GlmZ and targets it to cleavage by RNase E. Consequently, GlmZ is inactivated and unable to activate GlmS synthesis. Under low GlcN6P concentrations, RapZ is sequestered and inactivated by an other regulatory small RNA, GlmY, preventing GlmZ degradation and leading to synthesis of GlmS. This is RNase adapter protein RapZ from Escherichia coli O1:K1 / APEC.